The sequence spans 474 residues: Immunoglobulin heavy constant mu (474 aa).

Positions 1-105 are CH1; sequence GSASAPTLFP…NKEKNVPLPV (105 aa). Topologically, residues 1–450 are extracellular; it reads GSASAPTLFP…EEGFENLWAT (450 aa). Ig-like domains are found at residues 6-102, 111-211, 229-319, and 329-430; these read PTLF…KNVP, PKVS…QNAS, PSFA…QTIS, and PDVY…RTVD. Cystine bridges form between C28/C88 and C134/C197. N-linked (GlcNAc...) (complex) asparagine glycosylation occurs at N46. Residues 106–217 form a CH2 region; that stretch reads IAELPPKVSV…QNASSMCVPD (112 aa). N209 carries an N-linked (GlcNAc...) (complex) asparagine glycan. A CH3 region spans residues 218-323; it reads QDTAIRVFAI…LKQTISRPKG (106 aa). Cystine bridges form between C244–C303 and C351–C413. N-linked (GlcNAc...) asparagine glycosylation is found at N272 and N279. Residues 324–452 are CH4; the sequence is VALHRPDVYL…GFENLWATAS (129 aa). Residues 437–453 form an important for IgM oligomerization region; it reads VSADEEGFENLWATAST. N-linked (GlcNAc...) asparagine glycosylation is present at D440. Residues 451 to 471 form a helical membrane-spanning segment; sequence ASTFIVLFLLSLFYSTTVTLF. Topologically, residues 472–474 are cytoplasmic; the sequence is KVK.

As to quaternary structure, the basic structural unit of both sIgM and mIgM molecules consists of two identical heavy chains and two identical light chains; disulfide-linked. N-terminal variable regions of the heavy and light chains form the antigen binding sites, whereas the C-terminal constant regions of the heavy chains interact with immune receptors to mediate effector functions. Part of IgM antibody. Forms high order oligomers, homopentamers stabilized by the JCHAIN and homohexamers that lack JCHAIN. The oligomerization amplifies an inherently low affinity of IgM antibodies for the antigen by multi-point attachment (avidity). Adjacent IgM protomers associate via interchain disulfide links to form an asymmetric pentameric structure with a 50 degree gap. A single copy of JCHAIN is covalently linked to the first and the fifth IgM monomers via interchain disulfide bonds thus closing the pentamer ring. Only JCHAIN-containing IgM binds PIGR secretory component (via D1-CDR1 region); this interaction is a prerequisite for IgM transcytosis across mucosal epithelium. Pentameric sIgM interacts (via CH4 domain) with FCRM (via Ig-like domain); the interaction is glycan-independent and multivalent theoretically involving up to eight binding sites for the IgM pentamer. Interacts with FCAMR; this interaction facilitates the endocytosis of IgM-coated microbes or IgM-antigen immune complexes. Antigen-bound IgM (via the Fc region) binds to globular domains of C1q component of the complement system, all three modules C1QA, C1QB and C1QC being involved in IgM binding; this interaction is multivalent. Pentameric sIgM (via Fc region) interacts with CD5L (via SRCR2) through interchain disulfide-linkages; this interaction protects CD5L from renal excretion and provides for high levels of CD5L in circulation. In terms of assembly, part of IgM B cell receptor complex on pre-B cells, immature and mature B cells. The BCR complex consists of one membrane-bound IgM molecule responsible for antigen binding, non-covalently associated with CD79A and CD79B signaling chains. In terms of processing, N-glycosylated; important for IgM secretion and its localization at the plasma membrane. The interaction with FCMR is glycan-independent.

It is found in the secreted. The protein resides in the cell membrane. In terms of biological role, constant region of immunoglobulin heavy chains. Immunoglobulins, also known as antibodies, are membrane-bound or secreted glycoproteins produced by B lymphocytes. In the recognition phase of humoral immunity, the membrane-bound immunoglobulins serve as receptors which, upon binding of a specific antigen, trigger the clonal expansion and differentiation of B lymphocytes into immunoglobulins-secreting plasma cells. Secreted immunoglobulins mediate the effector phase of humoral immunity, which results in the elimination of bound antigens. The antigen binding site is formed by the variable domain of one heavy chain, together with that of its associated light chain. Thus, each immunoglobulin has two antigen binding sites with remarkable affinity for a particular antigen. The variable domains are assembled by a process called V-(D)-J rearrangement and can then be subjected to somatic hypermutations which, after exposure to antigen and selection, allow affinity maturation for a particular antigen. Constant region of secreted IgM (sIgM), also known as the Fc region of IgM antibody. Able to multimerize, forms high order polymers, mainly pentamers and occasionally hexamers, providing for multivalency and high avidity recognition of antigens. Natural sIgM are polyreactive and recognize conserved self- and pathogen-derived structures, whereas immune sIgM are secreted only upon exposure to pathogens and are antigen-specific. Both natural and immune sIgM are required for an efficient humoral immune response to infection. Mediates sIgM effector functions mostly via Fc receptors and the complement system. On lymphoid cells binds high-affinity Fc receptor FCMR and promotes induction of an efficient neutralizing IgG response while maintaining tolerance to self-antigens. Recruits C1q complement component to initiate the classical complement pathway, facilitating the recognition and neutralization of pathogens by the host. Together with C1q and mannose-binding lectin promotes the phagocytosis of apoptotic cells by macrophages, ensuring the clearance of potential autoimmune epitopes from tissues. Involved in mucosal immunity. It is transported by transcytosis across mucosal epithelium by PIGR and secreted on the apical side in complex with PIGR secretory component to scan mucosal lining for pathogens. IgM-antigen complexes undergo FCMR-mediated retrotranscytosis across mucosal M cells toward antigen-presenting cells in mucosal lymphoid tissues. Functionally, constant region of membrane-bound IgM, part of the B cell receptor complex (BCR). IgM BCR provides constitutive tonic signaling for B cell survival. Mediates pre-BCR signaling that regulates B cell selection and rearrangement of Ig genes via allelic exclusion. This is Immunoglobulin heavy constant mu from Homo sapiens (Human).